Here is a 389-residue protein sequence, read N- to C-terminus: Large envelope protein (389 aa).

An N-acetylmethionine modification is found at Met-1. Residue Gly-2 is the site of N-myristoyl glycine; by host attachment. A pre-S1 region spans residues 2 to 108; sequence GTNLSVPNPL…PPLRDTHPQA (107 aa). The pre-S stretch occupies residues 2–163; that stretch reads GTNLSVPNPL…LSKTGDPVPN (162 aa). The Virion surface; in external conformation segment spans residues 2 to 170; that stretch reads GTNLSVPNPL…VPNMENIASG (169 aa). At 2 to 242 the chain is on the intravirion; in internal conformation side; the sequence is GTNLSVPNPL…PGYRWMCLRR (241 aa). The interval 74-103 is disordered; that stretch reads LTTVPAAPPPASTNRQSGRQPTPLSPPLRD. A compositionally biased stretch (polar residues) spans 85–95; that stretch reads STNRQSGRQPT. The interval 109–163 is pre-S2; that stretch reads MQWNSTTFHQTLQDPGVRALYFPAGGSSSGTVSPAQNTVSAISSILSKTGDPVPN. A helical transmembrane segment spans residues 171–191; the sequence is LLGPLLVLQAGFFLLTKILTI. The Intravirion; in external conformation segment spans residues 192–242; the sequence is PQSLDSWWTSLNFLGGTPVCLGQNSQSQISSHSPTCCPPICPGYRWMCLRR. Residues 243–263 form a helical membrane-spanning segment; sequence FIIFLCILLLCLIFLLVLLDY. At 264–337 the chain is on the virion surface side; sequence QGMLPVCPLI…WASVRFSWLS (74 aa). Residue Asn-309 is glycosylated (N-linked (GlcNAc...) asparagine; by host). The helical transmembrane segment at 338–358 threads the bilayer; that stretch reads LLVPFVQWFVGLSPTVWLSVI. The Intravirion segment spans residues 359–364; that stretch reads WMIWFW. The helical transmembrane segment at 365-387 threads the bilayer; it reads GPSLYNILSPFMPLLPIFFCLWV. Residues 388–389 lie on the Virion surface side of the membrane; the sequence is YI.

Belongs to the orthohepadnavirus major surface antigen family. In terms of assembly, interacts (via its myristoylated pre-S1 region) with the host SLC10A1/NTCP; this interaction is essential for viral entry. In its internal form (Li-HBsAg), interacts with the capsid protein and with the isoform S. Interacts with host chaperone CANX. As to quaternary structure, associates with host chaperone CANX through its pre-S2 N glycan; this association may be essential for isoform M proper secretion. In terms of assembly, interacts with isoform L. Interacts with the antigens of satellite virus HDV (HDVAgs); this interaction is required for encapsidation of HDV genomic RNA. Post-translationally, isoform M is N-terminally acetylated by host at a ratio of 90%, and N-glycosylated by host at the pre-S2 region. In terms of processing, myristoylated; this modification is essential for its interaction with the host protein SLC10A1/NTCP.

It is found in the virion membrane. Its function is as follows. The large envelope protein exists in two topological conformations, one which is termed 'external' or Le-HBsAg and the other 'internal' or Li-HBsAg. In its external conformation the protein attaches the virus to cell receptors and thereby initiating infection. This interaction determines the species specificity and liver tropism. This attachment induces virion internalization predominantly through caveolin-mediated endocytosis. The large envelope protein also assures fusion between virion membrane and endosomal membrane. In its internal conformation the protein plays a role in virion morphogenesis and mediates the contact with the nucleocapsid like a matrix protein. The middle envelope protein plays an important role in the budding of the virion. It is involved in the induction of budding in a nucleocapsid independent way. In this process the majority of envelope proteins bud to form subviral lipoprotein particles of 22 nm of diameter that do not contain a nucleocapsid. This chain is Large envelope protein, found in Hepatitis B virus genotype B/C subtype adw (isolate Okinawa/pODW282/1998) (HBV-B).